The sequence spans 78 residues: Conotoxin ArMKLT2-0312 (78 aa).

Residues 1 to 22 (MKLTCVLIIAVLFLTACQLITA) form the signal peptide. A propeptide spanning residues 23–45 (DYSRDKQEYRAVRLRDAMRYSRV) is cleaved from the precursor. At glutamine 48 the chain carries Pyrrolidone carboxylic acid. 3 cysteine pairs are disulfide-bonded: cysteine 49–cysteine 62, cysteine 56–cysteine 67, and cysteine 61–cysteine 75.

The protein belongs to the conotoxin O1 superfamily. In terms of tissue distribution, expressed by the venom duct.

The protein localises to the secreted. This Conus arenatus (Sand-dusted cone) protein is Conotoxin ArMKLT2-0312.